Here is a 374-residue protein sequence, read N- to C-terminus: dTDP-3-amino-3,4,6-trideoxy-alpha-D-glucose transaminase (374 aa).

Pyridoxal 5'-phosphate contacts are provided by residues G60, Q160, 181–186 (SFYPTK), Y214, Y221, 229–231 (NSR), and Y316. K186 bears the N6-(pyridoxal phosphate)lysine mark.

The protein belongs to the degT/dnrJ/eryC1 family. It depends on pyridoxal 5'-phosphate as a cofactor.

The catalysed reaction is dTDP-3-amino-3,4,6-trideoxy-alpha-D-glucose + 2-oxoglutarate = dTDP-3-dehydro-4,6-dideoxy-alpha-D-glucose + L-glutamate. The protein operates within antibiotic biosynthesis. Functionally, involved in the biosynthesis of the amino sugar dTDP-L-megosamine which is found in the macrolide antibiotic and antiparasitic megalomicin A. Catalyzes the reversible transfer of the amino group from L-glutamate to the C-3 position of dTDP-3-keto-4,6-deoxyglucose to yield dTDP-3-amino-3,4,6-trideoxyglucose. The protein is dTDP-3-amino-3,4,6-trideoxy-alpha-D-glucose transaminase of Micromonospora megalomicea subsp. nigra.